The sequence spans 152 residues: 3-dehydroquinate dehydratase (152 aa).

Tyr-26 functions as the Proton acceptor in the catalytic mechanism. Asn-77, His-83, and Asp-90 together coordinate substrate. The Proton donor role is filled by His-103. Substrate-binding positions include Leu-104–Ser-105 and Arg-114.

The protein belongs to the type-II 3-dehydroquinase family. As to quaternary structure, homododecamer.

It catalyses the reaction 3-dehydroquinate = 3-dehydroshikimate + H2O. The protein operates within metabolic intermediate biosynthesis; chorismate biosynthesis; chorismate from D-erythrose 4-phosphate and phosphoenolpyruvate: step 3/7. In terms of biological role, catalyzes a trans-dehydration via an enolate intermediate. The sequence is that of 3-dehydroquinate dehydratase from Tolumonas auensis (strain DSM 9187 / NBRC 110442 / TA 4).